The primary structure comprises 200 residues: NADH-quinone oxidoreductase subunit I (200 aa).

4Fe-4S ferredoxin-type domains are found at residues Arg-73–Thr-102 and Leu-112–Asp-141. Residues Cys-82, Cys-85, Cys-88, Cys-92, Cys-121, Cys-124, Cys-127, and Cys-131 each coordinate [4Fe-4S] cluster.

Belongs to the complex I 23 kDa subunit family. NDH-1 is composed of 14 different subunits. Subunits NuoA, H, J, K, L, M, N constitute the membrane sector of the complex. [4Fe-4S] cluster serves as cofactor.

It is found in the cell inner membrane. It catalyses the reaction a quinone + NADH + 5 H(+)(in) = a quinol + NAD(+) + 4 H(+)(out). Functionally, NDH-1 shuttles electrons from NADH, via FMN and iron-sulfur (Fe-S) centers, to quinones in the respiratory chain. The immediate electron acceptor for the enzyme in this species is believed to be ubiquinone. Couples the redox reaction to proton translocation (for every two electrons transferred, four hydrogen ions are translocated across the cytoplasmic membrane), and thus conserves the redox energy in a proton gradient. The polypeptide is NADH-quinone oxidoreductase subunit I (Campylobacter hominis (strain ATCC BAA-381 / DSM 21671 / CCUG 45161 / LMG 19568 / NCTC 13146 / CH001A)).